Consider the following 431-residue polypeptide: Phosphate regulon sensor protein PhoR (431 aa).

The Cytoplasmic segment spans residues 1–9 (MLERLSWKR). A helical membrane pass occupies residues 10 to 28 (LVLELLLCCLPAFILGAFF). Residues 29 to 32 (GYLP) are Periplasmic-facing. The helical transmembrane segment at 33 to 51 (WFLLASVTGLLIWHFWNLL) threads the bilayer. Residues 52 to 431 (RLSWWLWVDR…PERLIAKNSD (380 aa)) lie on the Cytoplasmic side of the membrane. Residues 96–172 (LIKRFRSGAE…RPLNLVLNTG (77 aa)) form the PAS domain. Residues 210-425 (NVSHELRTPL…RFSFVIPERL (216 aa)) enclose the Histidine kinase domain. A Phosphohistidine; by autocatalysis modification is found at histidine 213.

Its subcellular location is the cell inner membrane. The catalysed reaction is ATP + protein L-histidine = ADP + protein N-phospho-L-histidine.. Functionally, member of the two-component regulatory system PhoR/PhoB involved in the phosphate regulon genes expression. PhoR may function as a membrane-associated protein kinase that phosphorylates PhoB in response to environmental signals. This is Phosphate regulon sensor protein PhoR (phoR) from Escherichia coli (strain K12).